Here is a 309-residue protein sequence, read N- to C-terminus: MRKKISIIGAGFVGSTTAHWLAAKELGDIVLLDFVEGVPQGKALDLYEASPIEGFDVRVTGTNNYADTANSDVIVVTSGAPRKPGMSREDLIKVNADITRACISQAAPLSPNAVIIMVNNPLDAMTYLAAEVSGFPKERVIGQAGVLDAARYRTFIAMEAGVSVEDVQAMLMGGHGDEMVPLPRFSTISGIPVSEFIAPDRLAQIVERTRKGGGEIVNLLKTGSAYYAPAAATAQMVEAVLKDKKRVMPVAAYLTGQYGLNDIYFGVPVILGAGGVEKILELPLNEEEMALLNASAKAVRATLDTLKSL.

Residues 9–14 (GAGFVG) and Asp-33 each bind NAD(+). The substrate site is built by Arg-82 and Arg-88. NAD(+) is bound by residues Asn-95 and 118 to 120 (VNN). 2 residues coordinate substrate: Asn-120 and Arg-151. His-175 serves as the catalytic Proton acceptor.

Belongs to the LDH/MDH superfamily. MDH type 3 family. Homotetramer (active enzyme); homodimer and homotrimer at temperatures lower than 55 degrees Celsius (inactive forms).

The enzyme catalyses (S)-malate + NAD(+) = oxaloacetate + NADH + H(+). Functionally, catalyzes the reversible oxidation of malate to oxaloacetate. The chain is Malate dehydrogenase from Chloroflexus aurantiacus (strain ATCC 29366 / DSM 635 / J-10-fl).